The primary structure comprises 117 residues: Large ribosomal subunit protein bL19 (117 aa).

It belongs to the bacterial ribosomal protein bL19 family.

Functionally, this protein is located at the 30S-50S ribosomal subunit interface and may play a role in the structure and function of the aminoacyl-tRNA binding site. The chain is Large ribosomal subunit protein bL19 from Vibrio parahaemolyticus serotype O3:K6 (strain RIMD 2210633).